The sequence spans 247 residues: Adenosylcobinamide-GDP ribazoletransferase (247 aa).

6 helical membrane-spanning segments follow: residues 31–51 (ILFYPLVGLIIGGILFLVTCI), 55–75 (LPALLLAAIVFALWIWLTGGL), 109–129 (IGVLSIVIVCLLKFALIYVLI), 135–155 (LFLICIPILGRVVPSILFLTT), 183–203 (VLLLPLYWEWQGLIAIISFLI), and 227–247 (AIEIGETVLIFTFVVSYFYLV).

This sequence belongs to the CobS family. Requires Mg(2+) as cofactor.

It is found in the cell inner membrane. It carries out the reaction alpha-ribazole + adenosylcob(III)inamide-GDP = adenosylcob(III)alamin + GMP + H(+). The catalysed reaction is alpha-ribazole 5'-phosphate + adenosylcob(III)inamide-GDP = adenosylcob(III)alamin 5'-phosphate + GMP + H(+). It functions in the pathway cofactor biosynthesis; adenosylcobalamin biosynthesis; adenosylcobalamin from cob(II)yrinate a,c-diamide: step 7/7. Functionally, joins adenosylcobinamide-GDP and alpha-ribazole to generate adenosylcobalamin (Ado-cobalamin). Also synthesizes adenosylcobalamin 5'-phosphate from adenosylcobinamide-GDP and alpha-ribazole 5'-phosphate. In Acinetobacter baumannii (strain ACICU), this protein is Adenosylcobinamide-GDP ribazoletransferase.